The chain runs to 739 residues: Platelet endothelial cell adhesion molecule (739 aa).

Positions 1-27 are cleaved as a signal peptide; that stretch reads MQLRWTQRGMMWLGALLTLLLCSSLKG. Topologically, residues 28–599 are extracellular; the sequence is QENSFTINSI…TVRVYLPLEK (572 aa). Ig-like C2-type domains lie at 35 to 120, 145 to 213, and 236 to 315; these read NSIH…EKTT, GGVV…IFSG, and PKFH…SKVS. 3 N-linked (GlcNAc...) asparagine glycosylation sites follow: Asn-52, Asn-84, and Asn-151. Cys-57 and Cys-109 are disulfide-bonded. Cystine bridges form between Cys-152/Cys-206 and Cys-256/Cys-304. Residues Asn-301, Asn-320, Asn-356, Asn-371, Asn-435, Asn-446, Asn-453, Asn-550, and Asn-578 are each glycosylated (N-linked (GlcNAc...) asparagine). Ig-like C2-type domains lie at 328 to 403, 424 to 493, and 499 to 590; these read PKLE…VQIT, GQTI…EVLR, and PVDE…NTLT. Intrachain disulfides connect Cys-347–Cys-386, Cys-431–Cys-476, and Cys-522–Cys-571. A helical membrane pass occupies residues 600-618; it reads GLIAVVVIGVIIVTLVLGA. At 619–739 the chain is on the cytoplasmic side; it reads KCYFLKKAKA…SRTEGSLDGS (121 aa). Cys-620 carries S-palmitoyl cysteine lipidation. 2 short sequence motifs (ITIM motif) span residues 687 to 692 and 712 to 717; these read VEYTEV and TVYSEI. A phosphotyrosine; by FER mark is found at Tyr-689 and Tyr-714. Positions 708-730 are membrane-bound segment which detaches upon phosphorylation; sequence TETETVYSEIRKADPDFVENRYS. Residues 722–739 are may play a role in cytoprotective signaling; the sequence is PDFVENRYSRTEGSLDGS. Phosphoserine is present on residues Ser-730 and Ser-735.

In terms of assembly, trans-homodimer (via Ig-like C2-type 1 and Ig-like C2-type 2 domains); trans-homodimerization is required for cell-cell interaction. Forms a complex with BDKRB2 and GNAQ. Interacts with BDKRB2 and GNAQ. Interacts with PTPN11; Tyr-714 is critical for PTPN11 recruitment. Interacts with FER. Interacts with CD177; the interaction is Ca(2+)-dependent; the interaction is direct. Post-translationally, phosphorylated on Ser and Tyr residues by src kinases after cellular activation. Upon activation, phosphorylated on Ser-730 which probably initiates the dissociation of the membrane-interaction segment (residues 708-730) from the cell membrane allowing the sequential phosphorylation of Tyr-714 and Tyr-689. Constitutively phosphorylated on Ser-735 in resting platelets. Phosphorylated on tyrosine residues by FER and FES in response to FCER1 activation. In endothelial cells Fyn mediates mechanical-force (stretch or pull) induced tyrosine phosphorylation. Palmitoylation by ZDHHC21 is necessary for cell surface expression in endothelial cells and enrichment in membrane rafts.

The protein localises to the cell membrane. The protein resides in the membrane raft. It is found in the cell junction. In terms of biological role, cell adhesion molecule which is required for leukocyte transendothelial migration (TEM) under most inflammatory conditions. Tyr-689 plays a critical role in TEM and is required for efficient trafficking of PECAM1 to and from the lateral border recycling compartment (LBRC) and is also essential for the LBRC membrane to be targeted around migrating leukocytes. Trans-homophilic interaction may play a role in endothelial cell-cell adhesion via cell junctions. Heterophilic interaction with CD177 plays a role in transendothelial migration of neutrophils. Homophilic ligation of PECAM1 prevents macrophage-mediated phagocytosis of neighboring viable leukocytes by transmitting a detachment signal. Promotes macrophage-mediated phagocytosis of apoptotic leukocytes by tethering them to the phagocytic cells; PECAM1-mediated detachment signal appears to be disabled in apoptotic leukocytes. Modulates bradykinin receptor BDKRB2 activation. Regulates bradykinin- and hyperosmotic shock-induced ERK1/2 activation in endothelial cells. Induces susceptibility to atherosclerosis. The sequence is that of Platelet endothelial cell adhesion molecule (PECAM1) from Bos taurus (Bovine).